The primary structure comprises 364 residues: Probable dual-specificity RNA methyltransferase RlmN (364 aa).

Glu107 functions as the Proton acceptor in the catalytic mechanism. The 234-residue stretch at 113-346 (HDYGNSVCVT…ATIRREQGSD (234 aa)) folds into the Radical SAM core domain. Cysteines 120 and 351 form a disulfide. Residues Cys127, Cys131, and Cys134 each coordinate [4Fe-4S] cluster. Residues 177 to 178 (GE), Ser209, 232 to 234 (SLH), and Asn308 contribute to the S-adenosyl-L-methionine site. The active-site S-methylcysteine intermediate is Cys351.

This sequence belongs to the radical SAM superfamily. RlmN family. [4Fe-4S] cluster is required as a cofactor.

It is found in the cytoplasm. It catalyses the reaction adenosine(2503) in 23S rRNA + 2 reduced [2Fe-2S]-[ferredoxin] + 2 S-adenosyl-L-methionine = 2-methyladenosine(2503) in 23S rRNA + 5'-deoxyadenosine + L-methionine + 2 oxidized [2Fe-2S]-[ferredoxin] + S-adenosyl-L-homocysteine. The catalysed reaction is adenosine(37) in tRNA + 2 reduced [2Fe-2S]-[ferredoxin] + 2 S-adenosyl-L-methionine = 2-methyladenosine(37) in tRNA + 5'-deoxyadenosine + L-methionine + 2 oxidized [2Fe-2S]-[ferredoxin] + S-adenosyl-L-homocysteine. Its function is as follows. Specifically methylates position 2 of adenine 2503 in 23S rRNA and position 2 of adenine 37 in tRNAs. Confers resistance to some classes of antibiotics. The protein is Probable dual-specificity RNA methyltransferase RlmN of Staphylococcus aureus (strain MW2).